A 1493-amino-acid polypeptide reads, in one-letter code: ABC transporter C family member 7 (1493 aa).

The next 10 membrane-spanning stretches (helical) occupy residues 21–41 (FPMFSIFFNLLLLLVMFGSCV), 70–90 (VVICCETLSALNSVLLLLSCF), 102–122 (LMILLDLLFTALSWGAISFYI), 140–160 (VWWVLYFMFSCYRLLVDIALY), 165–185 (LVSVHLLLSDVLAVSVGLFLC), 309–329 (ILLSTLFAFVYTVSCYVAPYL), 343–360 (YSNQGVVLVTTFFVAKLV), 423–443 (WYMHDPWILVLQISLALLILY), 448–468 (LGSIAAFAATFLVMLGNIPLA), and 535–555 (SVLWAAPSFVSATAFGACMLL). One can recognise an ABC transmembrane type-1 1 domain in the interval 309–590 (ILLSTLFAFV…LPDTISMIVQ (282 aa)). Residues 624 to 847 (VEVSNGAFSW…GTDFMELVGA (224 aa)) enclose the ABC transporter 1 domain. An ATP-binding site is contributed by 659 to 666 (GTVGSGKS). The interval 863–898 (ASAQSTTSKESKVSNDEEKQEEDLPSPKGQLVQEEE) is disordered. Ser888 is subject to Phosphoserine. The next 6 membrane-spanning stretches (helical) occupy residues 915–935 (LAYGGALVPIILVVQILFQVL), 959–979 (GSTLILVYVFLATASSFCILV), 1038–1055 (FSNLAIAAVNILGIIGVM), 1059–1081 (AWQVLIVFIPVIAACTWYRQYYI), 1153–1173 (LSTVAFALSLVILVSVPEGVI), and 1177–1197 (FAGLAVTYALNLNSLQATLIW). The ABC transmembrane type-1 2 domain occupies 922–1204 (VPIILVVQIL…LIWTLCDLEN (283 aa)). In terms of domain architecture, ABC transporter 2 spans 1241–1475 (ITICNLQVRY…KSSSFSKLVA (235 aa)). 1275 to 1282 (GRTGCGKS) contributes to the ATP binding site.

This sequence belongs to the ABC transporter superfamily. ABCC family. Conjugate transporter (TC 3.A.1.208) subfamily. Ubiquitous.

The protein resides in the membrane. It carries out the reaction ATP + H2O + xenobioticSide 1 = ADP + phosphate + xenobioticSide 2.. Pump for glutathione S-conjugates. In Arabidopsis thaliana (Mouse-ear cress), this protein is ABC transporter C family member 7 (ABCC7).